The chain runs to 466 residues: Asparagine--tRNA ligase (466 aa).

The protein belongs to the class-II aminoacyl-tRNA synthetase family. Homodimer.

Its subcellular location is the cytoplasm. The catalysed reaction is tRNA(Asn) + L-asparagine + ATP = L-asparaginyl-tRNA(Asn) + AMP + diphosphate + H(+). This Shewanella putrefaciens (strain CN-32 / ATCC BAA-453) protein is Asparagine--tRNA ligase.